A 585-amino-acid polypeptide reads, in one-letter code: Probable phosphoglucomutase, cytoplasmic 2 (585 aa).

The interval 1–20 is disordered; the sequence is MVSFKVSLVSTSPIDGQKPG. 2 residues coordinate alpha-D-glucose 1,6-bisphosphate: R25 and S124. S124 acts as the Phosphoserine intermediate in catalysis. The Mg(2+) site is built by S124, D301, D303, and D305. S124 is modified (phosphoserine). 6 residues coordinate alpha-D-glucose 1,6-bisphosphate: D305, R306, T369, E388, S390, and K401.

This sequence belongs to the phosphohexose mutase family. In terms of assembly, monomer. The cofactor is Mg(2+).

It localises to the cytoplasm. It carries out the reaction alpha-D-glucose 1-phosphate = alpha-D-glucose 6-phosphate. The enzyme catalyses O-phospho-L-seryl-[protein] + alpha-D-glucose 1-phosphate = alpha-D-glucose 1,6-bisphosphate + L-seryl-[protein]. It catalyses the reaction alpha-D-glucose 1,6-bisphosphate + L-seryl-[protein] = O-phospho-L-seryl-[protein] + alpha-D-glucose 6-phosphate. Functionally, catalyzes the reversible isomerization of alpha-D-glucose 1-phosphate to alpha-D-glucose 6-phosphate. The mechanism proceeds via the intermediate compound alpha-D-glucose 1,6-bisphosphate. This enzyme participates in both the breakdown and synthesis of glucose. In Arabidopsis thaliana (Mouse-ear cress), this protein is Probable phosphoglucomutase, cytoplasmic 2.